Reading from the N-terminus, the 67-residue chain is Nigrocin-2GRc (67 aa).

The signal sequence occupies residues 1 to 22 (MFTMKKSMLLLFFLGTISLSLC). The propeptide occupies 23–46 (EQERNADEEERRDEEVAKMEEIKR). A disulfide bridge links Cys-61 with Cys-67.

As to expression, expressed by the skin glands.

It is found in the secreted. Antimicrobial peptide active at least against the Gram-positive bacterium S.aureus but with otherwise unclear activity spectrum. Lacks hemolytic activity against rabbit or human erythrocytes. The chain is Nigrocin-2GRc from Odorrana grahami (Yunnanfu frog).